Consider the following 1169-residue polypeptide: Integrin alpha-X (1169 aa).

An N-terminal signal peptide occupies residues 1 to 19; that stretch reads MSCTWIAFLLLLGFVSCLG. At 20–1116 the chain is on the extracellular side; it reads FNLDAEKLTH…EMYKVHNPVP (1097 aa). FG-GAP repeat units follow at residues 23–78 and 79–138; these read DAEK…NCEP and ISLQ…QSQN. A disulfide bond links Cys-69 and Cys-76. A glycan (N-linked (GlcNAc...) asparagine) is linked at Asn-89. 2 disulfides stabilise this stretch: Cys-108–Cys-126 and Cys-116–Cys-146. A VWFA domain is found at 152 to 330; sequence DIVFLIDGSG…DALKDIENQL (179 aa). Residues Asp-158, Ser-160, Ser-162, and Asp-260 each coordinate Mg(2+). The N-linked (GlcNAc...) asparagine glycan is linked to Asn-267. FG-GAP repeat units follow at residues 341–392, 393–444, 445–505, 508–566, and 571–631; these read ETPS…PTFI, NMSQ…SRHW, RPKS…GSRW, GTTL…QDIA, and QRIS…FTPA. The N-linked (GlcNAc...) asparagine glycan is linked to Asn-393. Residues Asp-467, Asp-469, Asp-471, and Asp-475 each coordinate Ca(2+). Cys-496 and Cys-507 are joined by a disulfide. Ca(2+) contacts are provided by Asp-531, Asn-533, Asp-535, Asp-539, Asp-594, Asp-598, and Asp-602. 2 cysteine pairs are disulfide-bonded: Cys-640–Cys-721 and Cys-656–Cys-711. N-linked (GlcNAc...) asparagine glycosylation occurs at Asn-734. 2 disulfides stabilise this stretch: Cys-770-Cys-776 and Cys-858-Cys-873. A glycan (N-linked (GlcNAc...) asparagine) is linked at Asn-949. Intrachain disulfides connect Cys-1007-Cys-1031 and Cys-1036-Cys-1041. Residues Asn-1059 and Asn-1084 are each glycosylated (N-linked (GlcNAc...) asparagine). The chain crosses the membrane as a helical span at residues 1117–1137; it reads LIVGSSVGGLLLLAIITAILY. Topologically, residues 1138-1169 are cytoplasmic; the sequence is KAGFFKRQYKEMLEEANGQFVSDGTPTPQVAQ. The GFFKR motif signature appears at 1140–1144; sequence GFFKR.

The protein belongs to the integrin alpha chain family. As to quaternary structure, heterodimer of an alpha and a beta subunit. Alpha-X associates with beta-2.

It is found in the membrane. In terms of biological role, integrin alpha-X/beta-2 is a receptor for fibrinogen. It recognizes the sequence G-P-R in fibrinogen. It mediates cell-cell interaction during inflammatory responses. It is especially important in monocyte adhesion and chemotaxis. The polypeptide is Integrin alpha-X (Itgax) (Mus musculus (Mouse)).